The following is a 453-amino-acid chain: Tubulin delta chain (453 aa).

143–149 serves as a coordination point for GTP; it reads AGGTGSG.

It belongs to the tubulin family. As to quaternary structure, found in a complex with TEDC1, TEDC2, TUBE1 and TUBD1.

Its subcellular location is the nucleus. It localises to the cytoplasm. The protein localises to the cytoskeleton. It is found in the microtubule organizing center. The protein resides in the centrosome. Its subcellular location is the centriole. It localises to the cell projection. The protein localises to the cilium. Its function is as follows. Acts as a positive regulator of hedgehog signaling and regulates ciliary function. In Macaca fascicularis (Crab-eating macaque), this protein is Tubulin delta chain (TUBD1).